The following is a 533-amino-acid chain: MQGACVLLLLGLHLQLSLGLVPVEEEDPAFWNRQAAQALDVAKKLQPIQTAAKNVILFLGDGMGVPTVTATRILKGQMNGKLGPETPLAMDQFPYVALSKTYNVDRQVPDSAGTATAYLCGVKGNYRTIGVSAAARYNQCKTTRGNEVTSVMNRAKKAGKSVGVVTTTRVQHASPAGAYAHTVNRNWYSDADLPADAQMNGCQDIAAQLVNNMDIDVILGGGRKYMFPVGTPDPEYPDDASVNGVRKRKQNLVQAWQAKHQGAQYVWNRTALLQAADDSSVTHLMGLFEPADMKYNVQQDHTKDPTLQEMTEVALRVVSRNPRGFYLFVEGGRIDHGHHDDKAYMALTEAGMFDNAIAKANELTSELDTLILVTADHSHVFSFGGYTLRGTSIFGLAPSKALDSKSYTSILYGNGPGYALGGGSRPDVNDSTSEDPSYQQQAAVPQASETHGGEDVAVFARGPQAHLVHGVEEETFVAHIMAFAGCVEPYTDCNLPAPTTATSIPDAAHLAASPPPLALLAGAMLLLLAPTLY.

The signal sequence occupies residues 1–19; that stretch reads MQGACVLLLLGLHLQLSLG. Aspartate 61 lines the Mg(2+) pocket. The Zn(2+) site is built by aspartate 61 and serine 111. The active-site Phosphoserine intermediate is serine 111. Residues cysteine 140 and cysteine 202 are joined by a disulfide bond. Mg(2+) is bound at residue serine 174. Glutamate 235 contacts Ca(2+). An N-linked (GlcNAc...) asparagine glycan is attached at asparagine 268. Ca(2+) contacts are provided by phenylalanine 288, glutamate 289, and aspartate 304. Mg(2+) is bound at residue glutamate 330. Positions 335, 339, 376, and 377 each coordinate Zn(2+). Residue asparagine 429 is glycosylated (N-linked (GlcNAc...) asparagine). Position 451 (histidine 451) interacts with Zn(2+). Cysteine 486 and cysteine 493 are disulfide-bonded. Aspartate 506 is lipidated: GPI-anchor amidated aspartate. The propeptide at 507–533 is removed in mature form; that stretch reads AAHLAASPPPLALLAGAMLLLLAPTLY.

The protein belongs to the alkaline phosphatase family. In terms of assembly, homodimer. It depends on Mg(2+) as a cofactor. The cofactor is Zn(2+). Ca(2+) serves as cofactor.

The protein localises to the cell membrane. It carries out the reaction a phosphate monoester + H2O = an alcohol + phosphate. Alkaline phosphatase that can hydrolyze various phosphate compounds. This chain is Intestinal-type alkaline phosphatase (ALPI), found in Bos taurus (Bovine).